Consider the following 777-residue polypeptide: DNA ligase (777 aa).

Residues 35-39 (DAEYD), 84-85 (SL), and Glu-116 contribute to the NAD(+) site. The N6-AMP-lysine intermediate role is filled by Lys-118. NAD(+)-binding residues include Arg-139, Glu-176, Lys-293, and Lys-317. Cys-411, Cys-414, Cys-429, and Cys-435 together coordinate Zn(2+). In terms of domain architecture, BRCT spans 691–777 (MESQPLEGQT…NQHGIDPGAL (87 aa)).

It belongs to the NAD-dependent DNA ligase family. LigA subfamily. It depends on Mg(2+) as a cofactor. Mn(2+) serves as cofactor.

It carries out the reaction NAD(+) + (deoxyribonucleotide)n-3'-hydroxyl + 5'-phospho-(deoxyribonucleotide)m = (deoxyribonucleotide)n+m + AMP + beta-nicotinamide D-nucleotide.. Functionally, DNA ligase that catalyzes the formation of phosphodiester linkages between 5'-phosphoryl and 3'-hydroxyl groups in double-stranded DNA using NAD as a coenzyme and as the energy source for the reaction. It is essential for DNA replication and repair of damaged DNA. This chain is DNA ligase, found in Alcanivorax borkumensis (strain ATCC 700651 / DSM 11573 / NCIMB 13689 / SK2).